A 122-amino-acid polypeptide reads, in one-letter code: Fluoride-specific ion channel FluC (122 aa).

Helical transmembrane passes span 4-24, 36-56, 65-85, and 100-120; these read ILLI…VSGI, LIVN…SLFG, FIIT…YESF, and ILLN…ASMF. Residues Gly72 and Thr75 each contribute to the Na(+) site.

This sequence belongs to the fluoride channel Fluc/FEX (TC 1.A.43) family.

It localises to the cell membrane. The enzyme catalyses fluoride(in) = fluoride(out). Na(+) is not transported, but it plays an essential structural role and its presence is essential for fluoride channel function. In terms of biological role, fluoride-specific ion channel. Important for reducing fluoride concentration in the cell, thus reducing its toxicity. This Methanococcus maripaludis (strain DSM 14266 / JCM 13030 / NBRC 101832 / S2 / LL) protein is Fluoride-specific ion channel FluC.